The sequence spans 421 residues: E3 ubiquitin protein ligase DRIP1 (421 aa).

The segment at 16-57 (CSICDNILRDATTISECLHTFCRKCIYEKITEDEIETCPVCN) adopts an RING-type zinc-finger fold. 2 stretches are compositionally biased toward polar residues: residues 106-121 (ISSL…AQAG) and 157-172 (ESTS…TQNK). 2 disordered regions span residues 106 to 198 (ISSL…WDSK) and 216 to 307 (PLKS…QERR). Basic and acidic residues predominate over residues 178-198 (SCKESISNKENKDGDEPWDSK). The span at 218 to 227 (KSSASQGSGS) shows a compositional bias: low complexity. The segment covering 244–253 (TKTKNKKRKC) has biased composition (basic residues). Polar residues predominate over residues 262–271 (NGDPTTSETV). The span at 274–284 (KRMRTTQRKRS) shows a compositional bias: basic residues. Polar residues predominate over residues 285 to 294 (ATTLGDSRNL).

As to quaternary structure, interacts with DREB2A. Autoubiquitinated. Expressed in roots, leaves and flowers.

The protein resides in the nucleus. The catalysed reaction is S-ubiquitinyl-[E2 ubiquitin-conjugating enzyme]-L-cysteine + [acceptor protein]-L-lysine = [E2 ubiquitin-conjugating enzyme]-L-cysteine + N(6)-ubiquitinyl-[acceptor protein]-L-lysine.. It functions in the pathway protein modification; protein ubiquitination. In terms of biological role, E3 ubiquitin-protein ligase that acts as a negative regulator of the response to water stress. Mediates ubiquitination and subsequent proteasomal degradation of the drought-induced transcriptional activator DREB2A. Functionally redundant with DRIP2. This is E3 ubiquitin protein ligase DRIP1 (DRIP1) from Arabidopsis thaliana (Mouse-ear cress).